We begin with the raw amino-acid sequence, 47 residues long: Putative heat shock protein HSP90 (47 aa).

R47 contacts ATP.

This sequence belongs to the heat shock protein 90 family. In terms of assembly, homodimer.

Its subcellular location is the cytoplasm. Its function is as follows. Putative molecular chaperone that may promote the maturation, structural maintenance and proper regulation of specific target proteins. This Populus euphratica (Euphrates poplar) protein is Putative heat shock protein HSP90.